A 137-amino-acid chain; its full sequence is Large ribosomal subunit protein bL21 (137 aa).

The interval 1–26 is disordered; that stretch reads MADTKTATPATDAEEATATPPAAAPS.

The protein belongs to the bacterial ribosomal protein bL21 family. As to quaternary structure, part of the 50S ribosomal subunit. Contacts protein L20.

This protein binds to 23S rRNA in the presence of protein L20. The chain is Large ribosomal subunit protein bL21 from Parasynechococcus marenigrum (strain WH8102).